The following is a 326-amino-acid chain: MGVHILSTGSSVPNFSVENQQFEDIIETSDHWISTRTGIKKSILPLLLPSLTKLAAEAANDALSKASINAEDIDLIILATSTPDDLFGSASQLQAEIGATSSTAFDITAACSGFIIALVTASQFIQAGSYNKVLVVGADTMSRWIDWSDRSSCILFGDGAGAVLIGESSINSILGFKLCTDGRLNSHLQLMNSPSDSQQFGLTTVPKGRYDSIRMNGKEVYKFAVFQVPIVIKNCLNDVNISIDEVDWFILHQANIRILEAIATRLSIPLSKMITNLENYGNTSAASIPLALDEAIKEKKIQPGQVVVLAGFGAGLTWGAIVLKWQ.

Catalysis depends on residues Cys111 and His252. The tract at residues 253–257 (QANIR) is ACP-binding. Asn282 is an active-site residue.

The protein belongs to the thiolase-like superfamily. FabH family. In terms of assembly, homodimer.

Its subcellular location is the plastid. It is found in the chloroplast. It carries out the reaction malonyl-[ACP] + acetyl-CoA + H(+) = 3-oxobutanoyl-[ACP] + CO2 + CoA. It participates in lipid metabolism; fatty acid biosynthesis. In terms of biological role, catalyzes the condensation reaction of fatty acid synthesis by the addition to an acyl acceptor of two carbons from malonyl-ACP. Catalyzes the first condensation reaction which initiates fatty acid synthesis and may therefore play a role in governing the total rate of fatty acid production. Possesses both acetoacetyl-ACP synthase and acetyl transacylase activities. Its substrate specificity determines the biosynthesis of branched-chain and/or straight-chain of fatty acids. The sequence is that of Beta-ketoacyl-[acyl-carrier-protein] synthase III from Porphyra umbilicalis (Purple laver).